A 161-amino-acid polypeptide reads, in one-letter code: Phosphotransferase enzyme IIB component GlvB (161 aa).

Residues 10 to 32 (LTQIAIGLCFTLLYFVVFRTLIL) form a helical membrane-spanning segment. The PTS EIIB type-1 domain maps to 70-152 (LDQAAGILQA…DSLINSHQSA (83 aa)). Cysteine 92 (phosphocysteine intermediate) is an active-site residue.

The protein localises to the cell inner membrane. Functionally, the phosphoenolpyruvate-dependent sugar phosphotransferase system (sugar PTS), a major carbohydrate active -transport system, catalyzes the phosphorylation of incoming sugar substrates concomitantly with their translocation across the cell membrane. This operon may be cryptic in wild-type K12 strains. This chain is Phosphotransferase enzyme IIB component GlvB, found in Escherichia coli (strain K12).